The following is a 160-amino-acid chain: Crossover junction endodeoxyribonuclease RuvC (160 aa).

Residues aspartate 9, glutamate 68, and aspartate 141 contribute to the active site. Residues aspartate 9, glutamate 68, and aspartate 141 each coordinate Mg(2+).

It belongs to the RuvC family. In terms of assembly, homodimer which binds Holliday junction (HJ) DNA. The HJ becomes 2-fold symmetrical on binding to RuvC with unstacked arms; it has a different conformation from HJ DNA in complex with RuvA. In the full resolvosome a probable DNA-RuvA(4)-RuvB(12)-RuvC(2) complex forms which resolves the HJ. It depends on Mg(2+) as a cofactor.

Its subcellular location is the cytoplasm. It carries out the reaction Endonucleolytic cleavage at a junction such as a reciprocal single-stranded crossover between two homologous DNA duplexes (Holliday junction).. Its function is as follows. The RuvA-RuvB-RuvC complex processes Holliday junction (HJ) DNA during genetic recombination and DNA repair. Endonuclease that resolves HJ intermediates. Cleaves cruciform DNA by making single-stranded nicks across the HJ at symmetrical positions within the homologous arms, yielding a 5'-phosphate and a 3'-hydroxyl group; requires a central core of homology in the junction. The consensus cleavage sequence is 5'-(A/T)TT(C/G)-3'. Cleavage occurs on the 3'-side of the TT dinucleotide at the point of strand exchange. HJ branch migration catalyzed by RuvA-RuvB allows RuvC to scan DNA until it finds its consensus sequence, where it cleaves and resolves the cruciform DNA. This chain is Crossover junction endodeoxyribonuclease RuvC, found in Campylobacter jejuni subsp. jejuni serotype O:23/36 (strain 81-176).